The sequence spans 285 residues: Protease HtpX homolog (285 aa).

2 helical membrane passes run 7 to 27 and 30 to 50; these read TAML…MIGG and GMTI…WFSD. Histidine 131 is a binding site for Zn(2+). The active site involves glutamate 132. Histidine 135 contributes to the Zn(2+) binding site. Transmembrane regions (helical) follow at residues 146 to 166 and 177 to 197; these read ISAT…FFGG and IAGI…QMAI. Glutamate 202 is a binding site for Zn(2+).

The protein belongs to the peptidase M48B family. It depends on Zn(2+) as a cofactor.

The protein localises to the cell inner membrane. The polypeptide is Protease HtpX homolog (Burkholderia mallei (strain NCTC 10247)).